A 485-amino-acid polypeptide reads, in one-letter code: tRNA sulfurtransferase (485 aa).

The THUMP domain maps to 61–165 (EELIALLQRI…DDKMMLVKTR (105 aa)). ATP is bound by residues 183-184 (LI), K265, G287, and Q296. A disulfide bond links C344 and C456. The Rhodanese domain maps to 404 to 483 (LGENEVILDI…FSNVRVFAKN (80 aa)). The active-site Cysteine persulfide intermediate is C456.

It belongs to the ThiI family.

The protein localises to the cytoplasm. It carries out the reaction [ThiI sulfur-carrier protein]-S-sulfanyl-L-cysteine + a uridine in tRNA + 2 reduced [2Fe-2S]-[ferredoxin] + ATP + H(+) = [ThiI sulfur-carrier protein]-L-cysteine + a 4-thiouridine in tRNA + 2 oxidized [2Fe-2S]-[ferredoxin] + AMP + diphosphate. It catalyses the reaction [ThiS sulfur-carrier protein]-C-terminal Gly-Gly-AMP + S-sulfanyl-L-cysteinyl-[cysteine desulfurase] + AH2 = [ThiS sulfur-carrier protein]-C-terminal-Gly-aminoethanethioate + L-cysteinyl-[cysteine desulfurase] + A + AMP + 2 H(+). It functions in the pathway cofactor biosynthesis; thiamine diphosphate biosynthesis. In terms of biological role, catalyzes the ATP-dependent transfer of a sulfur to tRNA to produce 4-thiouridine in position 8 of tRNAs, which functions as a near-UV photosensor. Also catalyzes the transfer of sulfur to the sulfur carrier protein ThiS, forming ThiS-thiocarboxylate. This is a step in the synthesis of thiazole, in the thiamine biosynthesis pathway. The sulfur is donated as persulfide by IscS. In Haemophilus influenzae (strain 86-028NP), this protein is tRNA sulfurtransferase.